A 164-amino-acid polypeptide reads, in one-letter code: SsrA-binding protein (164 aa).

Belongs to the SmpB family.

Its subcellular location is the cytoplasm. In terms of biological role, required for rescue of stalled ribosomes mediated by trans-translation. Binds to transfer-messenger RNA (tmRNA), required for stable association of tmRNA with ribosomes. tmRNA and SmpB together mimic tRNA shape, replacing the anticodon stem-loop with SmpB. tmRNA is encoded by the ssrA gene; the 2 termini fold to resemble tRNA(Ala) and it encodes a 'tag peptide', a short internal open reading frame. During trans-translation Ala-aminoacylated tmRNA acts like a tRNA, entering the A-site of stalled ribosomes, displacing the stalled mRNA. The ribosome then switches to translate the ORF on the tmRNA; the nascent peptide is terminated with the 'tag peptide' encoded by the tmRNA and targeted for degradation. The ribosome is freed to recommence translation, which seems to be the essential function of trans-translation. This chain is SsrA-binding protein, found in Corynebacterium glutamicum (strain R).